The sequence spans 459 residues: Exodeoxyribonuclease 7 large subunit (459 aa).

The protein belongs to the XseA family. In terms of assembly, heterooligomer composed of large and small subunits.

It localises to the cytoplasm. The catalysed reaction is Exonucleolytic cleavage in either 5'- to 3'- or 3'- to 5'-direction to yield nucleoside 5'-phosphates.. Bidirectionally degrades single-stranded DNA into large acid-insoluble oligonucleotides, which are then degraded further into small acid-soluble oligonucleotides. In Pseudomonas fluorescens (strain Pf0-1), this protein is Exodeoxyribonuclease 7 large subunit.